A 1091-amino-acid polypeptide reads, in one-letter code: Ubiquitin carboxyl-terminal hydrolase 36 (1091 aa).

The disordered stretch occupies residues 115 to 152 (ANGHDNNGRKLSDHPNQNHNHANPNGHHANPNELPKPK). Residues 128-146 (HPNQNHNHANPNGHHANPN) are compositionally biased toward low complexity. The USP domain maps to 176-484 (SGMINAGNTC…NAYIMFYELD (309 aa)). The active-site Nucleophile is Cys-185. Catalysis depends on His-443, which acts as the Proton acceptor. Ser-518 and Ser-522 each carry phosphoserine. Disordered stretches follow at residues 523 to 572 (PAKF…KSPL), 594 to 892 (PTAN…ELLK), 972 to 1007 (QRDL…GYNP), and 1068 to 1091 (LAAG…QQQS). Positions 547-572 (TTIQFKPQHQPSHQQNGVQQSAKSPL) are enriched in polar residues. Positions 594-612 (PTANGNKSSSNHSNHKSVN) are enriched in low complexity. Residues 643-652 (KMDDCMDSGK) show a composition bias toward basic and acidic residues. Low complexity predominate over residues 653–667 (PKSPVKTPVKTPLKS). Thr-659 and Thr-663 each carry phosphothreonine. Ser-673 and Ser-675 each carry phosphoserine. The span at 691–702 (RSSDSSDSEHEP) shows a compositional bias: basic and acidic residues. Polar residues predominate over residues 703–727 (TTSSVQLNGHSKTNGSLSNGSSKST). Residue Ser-749 is modified to Phosphoserine. A compositionally biased stretch (acidic residues) spans 749-759 (SEDDDDDEDEP). A compositionally biased stretch (low complexity) spans 769 to 780 (PQKQSQSQSRSG). Positions 781–790 (PPSPKTPPSP) are enriched in pro residues. Ser-783 bears the Phosphoserine mark. A Phosphothreonine modification is found at Thr-786. Ser-789 carries the post-translational modification Phosphoserine. Residues 806–821 (DGDDDEDDDDDDDEVV) show a composition bias toward acidic residues. Thr-829 is subject to Phosphothreonine. Polar residues-rich tracts occupy residues 838–850 (FASS…SPTT) and 863–886 (AIKT…NGGT). Residue Ser-847 is modified to Phosphoserine. At Thr-850 the chain carries Phosphothreonine.

It belongs to the peptidase C19 family. Interacts with atms/PAF1, but not with CycT.

The protein localises to the nucleus. The protein resides in the nucleolus. It catalyses the reaction Thiol-dependent hydrolysis of ester, thioester, amide, peptide and isopeptide bonds formed by the C-terminal Gly of ubiquitin (a 76-residue protein attached to proteins as an intracellular targeting signal).. Its function is as follows. Required for maintaining multiple types of adult stem cells, including male and female germline, epithelial follicle cell and intestinal stem cells. May function as a transcriptional repressor by continually deubiquiting histone H2B at the promoters of genes critical for cellular differentiation, thereby preventing histone H3 'Lys-4' trimethylation (H3K4). Controls selective autophagy activation by ubiquitinated proteins. The protein is Ubiquitin carboxyl-terminal hydrolase 36 (Usp36) of Drosophila ananassae (Fruit fly).